A 212-amino-acid chain; its full sequence is Uracil phosphoribosyltransferase (212 aa).

Residues arginine 78, arginine 103, and 130-138 (DPMLATGSS) contribute to the 5-phospho-alpha-D-ribose 1-diphosphate site. Uracil contacts are provided by residues isoleucine 193 and 198–200 (GDA). Aspartate 199 is a binding site for 5-phospho-alpha-D-ribose 1-diphosphate.

It belongs to the UPRTase family. Requires Mg(2+) as cofactor.

It carries out the reaction UMP + diphosphate = 5-phospho-alpha-D-ribose 1-diphosphate + uracil. Its pathway is pyrimidine metabolism; UMP biosynthesis via salvage pathway; UMP from uracil: step 1/1. Its activity is regulated as follows. Allosterically activated by GTP. Catalyzes the conversion of uracil and 5-phospho-alpha-D-ribose 1-diphosphate (PRPP) to UMP and diphosphate. This is Uracil phosphoribosyltransferase from Pseudomonas savastanoi pv. phaseolicola (strain 1448A / Race 6) (Pseudomonas syringae pv. phaseolicola (strain 1448A / Race 6)).